The chain runs to 338 residues: Increasing suppression factor 1 (338 aa).

Residues 50–70 (QNSSKSNNSHHSSSTNAGNTS) are compositionally biased toward low complexity. The segment at 50–75 (QNSSKSNNSHHSSSTNAGNTSRHIGN) is disordered. Residue S119 is modified to Phosphoserine. Over residues 267 to 306 (SLLSNGSSSSPLQTRNNSYSNSLVKSPSNSSLNTSVASSN) the composition is skewed to low complexity. Residues 267-322 (SLLSNGSSSSPLQTRNNSYSNSLVKSPSNSSLNTSVASSNEESSPHTSNCLEERNP) are disordered. The span at 307–316 (EESSPHTSNC) shows a compositional bias: polar residues.

It belongs to the ISF1/MBR1 family.

Its function is as follows. Could influence the NAM7/UPF1 function, possibly at the level of mRNA turnover. Participates in mitochondrial biogenesis. The chain is Increasing suppression factor 1 (ISF1) from Saccharomyces cerevisiae (strain ATCC 204508 / S288c) (Baker's yeast).